The chain runs to 175 residues: SKP1-like protein 20 (175 aa).

Residues 117-175 (ILAANYLNIKGLLDLTCQTVADMIKGKTPEEIRKTFNIKNDFTPEEEEEVRRENQWAFE) form an interaction with the F-box domain of F-box proteins region.

The protein belongs to the SKP1 family. Part of a SCF (SKP1-CUL1-F-box protein) E3 ubiquitin-protein ligase complex. Interacts with rice black streaked dwarf virus RBSDV protein P7-2. Is able to form the SCF complex together with CUL1 and the viral P7-2 protein. Interacts with D3.

Its subcellular location is the nucleus. Its pathway is protein modification; protein ubiquitination. In terms of biological role, involved in ubiquitination and subsequent proteasomal degradation of target proteins. Together with CUL1, a RING-box and a F-box protein, it forms a SCF E3 ubiquitin ligase complex. The functional specificity of this complex depends on the type of F-box protein. In the SCF complex, it serves as an adapter that links the F-box protein to CUL1. This is SKP1-like protein 20 from Oryza sativa subsp. japonica (Rice).